We begin with the raw amino-acid sequence, 76 residues long: Putative phosphotransferase enzyme IIA component YyzE (76 aa).

The 76-residue stretch at 1 to 76 folds into the PTS EIIA type-1 domain; it reads MVTPTKHAIG…LHQKIFTVVS (76 aa). H22 acts as the Tele-phosphohistidine intermediate in catalysis.

Its subcellular location is the cytoplasm. Functionally, the phosphoenolpyruvate-dependent sugar phosphotransferase system (PTS), a major carbohydrate active -transport system, catalyzes the phosphorylation of incoming sugar substrates concomitant with their translocation across the cell membrane. This chain is Putative phosphotransferase enzyme IIA component YyzE (yyzE), found in Bacillus subtilis (strain 168).